The following is a 274-amino-acid chain: Ribosomal RNA small subunit methyltransferase A (274 aa).

Residues His15, Leu17, Gly42, Glu64, Asp89, and Asn109 each coordinate S-adenosyl-L-methionine.

This sequence belongs to the class I-like SAM-binding methyltransferase superfamily. rRNA adenine N(6)-methyltransferase family. RsmA subfamily.

The protein resides in the cytoplasm. The enzyme catalyses adenosine(1518)/adenosine(1519) in 16S rRNA + 4 S-adenosyl-L-methionine = N(6)-dimethyladenosine(1518)/N(6)-dimethyladenosine(1519) in 16S rRNA + 4 S-adenosyl-L-homocysteine + 4 H(+). Specifically dimethylates two adjacent adenosines (A1518 and A1519) in the loop of a conserved hairpin near the 3'-end of 16S rRNA in the 30S particle. May play a critical role in biogenesis of 30S subunits. The polypeptide is Ribosomal RNA small subunit methyltransferase A (Synechococcus sp. (strain CC9605)).